The sequence spans 240 residues: Uridylate cyclase (240 aa).

Positions 45 to 180 constitute a Guanylate cyclase domain; that stretch reads TYLYADMANS…RAPNLAAKLS (136 aa). Tyr48 lines the a ribonucleoside 5'-triphosphate pocket. Mn(2+) is bound by residues Asp50 and Asp94. Arg95 provides a ligand contact to a ribonucleoside 5'-triphosphate.

The protein belongs to the adenylyl cyclase class-4/guanylyl cyclase family. Pyrimidine cyclase subfamily. In terms of assembly, homodimer. Mn(2+) serves as cofactor.

The protein localises to the cytoplasm. The catalysed reaction is UTP = 3',5'-cyclic UMP + diphosphate. Pycsar (pyrimidine cyclase system for antiphage resistance) provides immunity against bacteriophage. The pyrimidine cyclase (PycC) synthesizes cyclic nucleotides in response to infection; these serve as specific second messenger signals. The signals activate the adjacent effector, leading to bacterial cell death and abortive phage infection. A clade B Pycsar system. In terms of biological role, the pyrimidine cyclase gene of a two-gene Pycsar system, weakly generates cyclic UMP (cUMP) from UTP, has little to no activity on ATP, CTP or GTP. Expression of this and adjacent effector RsmPycTM (AC A0A1V0HUU2) probably confers resistance to bacteriophage. The genes are probably only expressed in response to bacteriophage infection. The protein is Uridylate cyclase of Rhodovulum sp. (strain MB263).